The chain runs to 507 residues: MFS transporter fsa7 (507 aa).

Positions 1 to 65 (MATKDPAVTT…PDDPEHPLNW (65 aa)) are disordered. A glycan (N-linked (GlcNAc...) asparagine) is linked at asparagine 64. The chain crosses the membrane as a helical span at residues 72-92 (LHLVIVSLFTLAANLAATMFA). Asparagine 106 is a glycosylation site (N-linked (GlcNAc...) asparagine). 5 helical membrane-spanning segments follow: residues 111-131 (AMTVSLYVLGFALGPLLLAPL), 146-166 (FVYIAFTIGCAFSTNVAMFLV), 169-189 (IICGCAASGPMSIGGGTVADL), 200-220 (ALFTVGPLLGPVIGPIIGGFV), and 228-248 (WTFRIILIFSGLIGVATVIFM). Residue asparagine 252 is glycosylated (N-linked (GlcNAc...) asparagine). The next 6 helical transmembrane spans lie at 302-322 (PIVLLVSLYTGILFGLIFLLF), 341-361 (GLAYLGLGIGMILGLVLFSVL), 379-399 (LILMKWLGPVTPLGLFIYGWT), 406-426 (WIVPIIGTFVVGFGSLFVVIP), 429-449 (IYLVDSFGAEAAASAMAANLL), and 472-492 (GWGNSVLGFICLLFTPVPWFF).

It belongs to the major facilitator superfamily.

It is found in the cell membrane. In terms of biological role, efflux pump that might be required for efficient secretion of fusarisetin A or other secondary metabolies produced by the fusarisetin A gene cluster. The protein is MFS transporter fsa7 of Fusarium sp. (strain FN080326).